Here is a 376-residue protein sequence, read N- to C-terminus: TraB domain-containing protein (376 aa).

An N-acetylmethionine modification is found at Met1. A disordered region spans residues 1-34 (MDGEEQQPPHEANVEPVVPSEASEPVPRVLSGDP). Residues 14–27 (VEPVVPSEASEPVP) show a composition bias toward low complexity. The residue at position 65 (Thr65) is a Phosphothreonine.

This is TraB domain-containing protein (TRABD) from Homo sapiens (Human).